We begin with the raw amino-acid sequence, 313 residues long: HPr kinase/phosphorylase (313 aa).

Active-site residues include H136 and K157. 151–158 (GDSGIGKS) is an ATP binding site. Position 158 (S158) interacts with Mg(2+). The Proton acceptor; for phosphorylation activity. Proton donor; for dephosphorylation activity role is filled by D175. The segment at 199–208 (LEIRGLGIIN) is important for the catalytic mechanism of both phosphorylation and dephosphorylation. E200 contacts Mg(2+). R241 is a catalytic residue. The important for the catalytic mechanism of dephosphorylation stretch occupies residues 262–267 (PVRPGR).

This sequence belongs to the HPrK/P family. Homohexamer. Requires Mg(2+) as cofactor.

It catalyses the reaction [HPr protein]-L-serine + ATP = [HPr protein]-O-phospho-L-serine + ADP + H(+). The enzyme catalyses [HPr protein]-O-phospho-L-serine + phosphate + H(+) = [HPr protein]-L-serine + diphosphate. Functionally, catalyzes the ATP- as well as the pyrophosphate-dependent phosphorylation of a specific serine residue in HPr, a phosphocarrier protein of the phosphoenolpyruvate-dependent sugar phosphotransferase system (PTS). HprK/P also catalyzes the pyrophosphate-producing, inorganic phosphate-dependent dephosphorylation (phosphorolysis) of seryl-phosphorylated HPr (P-Ser-HPr). The two antagonistic activities of HprK/P are regulated by several intracellular metabolites, which change their concentration in response to the absence or presence of rapidly metabolisable carbon sources (glucose, fructose, etc.) in the growth medium. Therefore, by controlling the phosphorylation state of HPr, HPrK/P is a sensor enzyme that plays a major role in the regulation of carbon metabolism and sugar transport: it mediates carbon catabolite repression (CCR), and regulates PTS-catalyzed carbohydrate uptake and inducer exclusion. The protein is HPr kinase/phosphorylase of Staphylococcus saprophyticus subsp. saprophyticus (strain ATCC 15305 / DSM 20229 / NCIMB 8711 / NCTC 7292 / S-41).